Here is a 214-residue protein sequence, read N- to C-terminus: Adenylate kinase (214 aa).

10 to 15 (GAGKGT) is an ATP binding site. The tract at residues 30 to 59 (STGDMFREEISAKSELGRKVEDILKRGELV) is NMP. AMP-binding positions include Thr-31, Arg-36, 57–59 (ELV), 85–88 (GYPR), and Gln-92. An LID region spans residues 126–163 (NRRICKNCGKIYNLITLPPKINGKCDVCGGELYQREDD). Residue Arg-127 participates in ATP binding. Residues Cys-130 and Cys-133 each contribute to the Zn(2+) site. An ATP-binding site is contributed by 136-137 (IY). Residues Cys-150 and Cys-153 each contribute to the Zn(2+) site. AMP is bound by residues Arg-160 and Arg-171. Met-199 is an ATP binding site.

This sequence belongs to the adenylate kinase family. In terms of assembly, monomer.

The protein localises to the cytoplasm. The enzyme catalyses AMP + ATP = 2 ADP. Its pathway is purine metabolism; AMP biosynthesis via salvage pathway; AMP from ADP: step 1/1. Its function is as follows. Catalyzes the reversible transfer of the terminal phosphate group between ATP and AMP. Plays an important role in cellular energy homeostasis and in adenine nucleotide metabolism. This is Adenylate kinase from Thermosipho melanesiensis (strain DSM 12029 / CIP 104789 / BI429).